A 466-amino-acid polypeptide reads, in one-letter code: MSFNDKNFMLKNEPAKELYVKIAELPIYDFHCHLDPKEIFEDKVYEDIVDLWLGGDHYKWRLMRANGISEEEITGFASKLDKFKAWARTLERAFGNPLYHWSHLELRQVFGIEELLTEENAERLYHQLNTYLQEHQISPRKLIADARVAFIGTTDHPLDNLEWHKRLAEDSPIDTVVAPTFRPDEAFIEHRNFNLFIKRLEEVTEVAVRDFASFVEALGQRVSYFAQHGCRASDISFTAITYEEATLEELNDILLARMVGKEVGQSGINKWQTAIFRELCRMYKKHGFVTQVHFGALRNNHTGLFEKLGADVGVDSIGDQTCLTGNLNRLLDNLVKENALPKMIWYNLNPGYNIALANTLANFQANEEGRRSQLQFGAGWWFNDTKLGMIDQMNAYAEQGMLANFVGMLTDSRSFLSYQRHDYFRRILATYVGQWIVDEEVPEDYDRLGQFVEAISYYNAKEFFEQ.

Belongs to the metallo-dependent hydrolases superfamily. Uronate isomerase family.

It carries out the reaction D-glucuronate = D-fructuronate. The enzyme catalyses aldehydo-D-galacturonate = keto-D-tagaturonate. It functions in the pathway carbohydrate metabolism; pentose and glucuronate interconversion. The protein is Uronate isomerase of Streptococcus pneumoniae (strain 70585).